A 491-amino-acid polypeptide reads, in one-letter code: 3-octaprenyl-4-hydroxybenzoate carboxy-lyase (491 aa).

Residue asparagine 176 coordinates Mn(2+). Prenylated FMN is bound by residues 179-181 (IYR), 193-195 (RWL), and 198-199 (RG). A Mn(2+)-binding site is contributed by glutamate 242. Aspartate 291 functions as the Proton donor in the catalytic mechanism.

Belongs to the UbiD family. Homohexamer. It depends on prenylated FMN as a cofactor. The cofactor is Mn(2+).

Its subcellular location is the cell membrane. The catalysed reaction is a 4-hydroxy-3-(all-trans-polyprenyl)benzoate + H(+) = a 2-(all-trans-polyprenyl)phenol + CO2. The protein operates within cofactor biosynthesis; ubiquinone biosynthesis. In terms of biological role, catalyzes the decarboxylation of 3-octaprenyl-4-hydroxy benzoate to 2-octaprenylphenol, an intermediate step in ubiquinone biosynthesis. This is 3-octaprenyl-4-hydroxybenzoate carboxy-lyase from Chromobacterium violaceum (strain ATCC 12472 / DSM 30191 / JCM 1249 / CCUG 213 / NBRC 12614 / NCIMB 9131 / NCTC 9757 / MK).